We begin with the raw amino-acid sequence, 339 residues long: UPF0450 protein C17orf58 (339 aa).

Positions 1-17 (MTARAFWLLCLIVGSSP) are cleaved as a signal peptide. Positions 17–191 (PEAPVAERKT…PQRDAEPGAE (175 aa)) are disordered. A compositionally biased stretch (basic and acidic residues) spans 21 to 36 (VAERKTSPPHSRKPDS). The segment covering 56 to 72 (APQRPRAAEVAPAARAW) has biased composition (low complexity). Positions 112 to 125 (ASPRREPASEDAPR) are enriched in basic and acidic residues. Over residues 132-163 (LRFPAARPPALATEGSAGHAHPNRPRAAALAP) the composition is skewed to low complexity. Cystine bridges form between cysteine 193/cysteine 267, cysteine 197/cysteine 271, and cysteine 208/cysteine 338. The region spanning 193-338 (CARACRSDLD…QIQGAIHTQC (146 aa)) is the NTR domain.

It belongs to the UPF0450 family.

The polypeptide is UPF0450 protein C17orf58 (C17orf58) (Homo sapiens (Human)).